We begin with the raw amino-acid sequence, 144 residues long: Superoxide dismutase [Mn], mitochondrial (144 aa).

The Mn(2+) site is built by His-10, His-58, and Asp-143.

The protein belongs to the iron/manganese superoxide dismutase family. In terms of assembly, homotetramer. Mn(2+) is required as a cofactor.

It is found in the mitochondrion matrix. The enzyme catalyses 2 superoxide + 2 H(+) = H2O2 + O2. Destroys superoxide anion radicals which are normally produced within the cells and which are toxic to biological systems. The sequence is that of Superoxide dismutase [Mn], mitochondrial from Eptatretus stoutii (Pacific hagfish).